Consider the following 946-residue polypeptide: Bifunctional glutamine synthetase adenylyltransferase/adenylyl-removing enzyme (946 aa).

The tract at residues 1–440 is adenylyl removase; sequence MKPLSSPLQQ…VFNELIGDDE (440 aa). Positions 449–946 are adenylyl transferase; the sequence is SEQWRELWQD…ASWQKWLVEE (498 aa).

It belongs to the GlnE family. Mg(2+) is required as a cofactor.

The catalysed reaction is [glutamine synthetase]-O(4)-(5'-adenylyl)-L-tyrosine + phosphate = [glutamine synthetase]-L-tyrosine + ADP. The enzyme catalyses [glutamine synthetase]-L-tyrosine + ATP = [glutamine synthetase]-O(4)-(5'-adenylyl)-L-tyrosine + diphosphate. Involved in the regulation of glutamine synthetase GlnA, a key enzyme in the process to assimilate ammonia. When cellular nitrogen levels are high, the C-terminal adenylyl transferase (AT) inactivates GlnA by covalent transfer of an adenylyl group from ATP to specific tyrosine residue of GlnA, thus reducing its activity. Conversely, when nitrogen levels are low, the N-terminal adenylyl removase (AR) activates GlnA by removing the adenylyl group by phosphorolysis, increasing its activity. The regulatory region of GlnE binds the signal transduction protein PII (GlnB) which indicates the nitrogen status of the cell. The sequence is that of Bifunctional glutamine synthetase adenylyltransferase/adenylyl-removing enzyme from Escherichia coli (strain K12 / MC4100 / BW2952).